The following is a 248-amino-acid chain: Triosephosphate isomerase (248 aa).

Residues Asn10 and Lys12 each contribute to the substrate site. Residue His95 is the Electrophile of the active site. Glu165 serves as the catalytic Proton acceptor.

This sequence belongs to the triosephosphate isomerase family. Homodimer.

It is found in the cytoplasm. It catalyses the reaction D-glyceraldehyde 3-phosphate = dihydroxyacetone phosphate. Its pathway is carbohydrate biosynthesis; gluconeogenesis. It participates in carbohydrate degradation; glycolysis; D-glyceraldehyde 3-phosphate from glycerone phosphate: step 1/1. The chain is Triosephosphate isomerase (TPI1) from Candida albicans (strain SC5314 / ATCC MYA-2876) (Yeast).